A 395-amino-acid polypeptide reads, in one-letter code: Endophilin-B2 (395 aa).

An N-acetylmethionine modification is found at Met-1. The interval 1–27 (MDFNMKKLASDAGIFFTRAVQFTEEKF) is membrane-binding amphipathic helix. Ser-10 is subject to Phosphoserine. One can recognise a BAR domain in the interval 24–287 (EEKFGQAEKT…LGRFPGTFVG (264 aa)). 2 coiled-coil regions span residues 116–132 (IKVA…ERDF) and 206–240 (ASAL…LLLE). One can recognise an SH3 domain in the interval 335–395 (SGTRKARVLY…VPVTYLELLS (61 aa)). The residue at position 395 (Ser-395) is a Phosphoserine.

This sequence belongs to the endophilin family. Homodimer, and heterodimer with SH3GLB1. In terms of tissue distribution, detected in skeletal muscle, adipocyte, brain, lung, colon and mammary gland.

The protein localises to the cytoplasm. This Homo sapiens (Human) protein is Endophilin-B2 (SH3GLB2).